The chain runs to 235 residues: MLRTSVRSPLLYRCLSKRFQSTAVPLSSKAVQNDLELTPKQQTNSSTTTSTNIPPQLPVNVEALYYAPLKNPVTHGHLVADLQLRAYDNENLDFFCDFILRAGYYLGLPMTGPKPLPTRRERWTVIRSPFVHAKSKENFERHTHKRLIRVWDSNPEVVQMLVDYITKNSIAGVGLKCTTYQRTTVDAKSGKISDAIEEINSTHNINPSLKENEEIGAKVVELLNTPTFKKYLEEK.

The transit peptide at 1–19 directs the protein to the mitochondrion; sequence MLRTSVRSPLLYRCLSKRF.

This sequence belongs to the universal ribosomal protein uS10 family. As to quaternary structure, part of the mitochondrial small ribosomal subunit.

It localises to the mitochondrion. Its function is as follows. Involved in mitochondrial genome encoded proteins translation. Involved in the binding of tRNA to the ribosomes. In Candida glabrata (strain ATCC 2001 / BCRC 20586 / JCM 3761 / NBRC 0622 / NRRL Y-65 / CBS 138) (Yeast), this protein is Small ribosomal subunit protein uS10m (RSM10).